The following is a 205-amino-acid chain: High frequency lysogenization protein HflD homolog (205 aa).

Belongs to the HflD family.

Its subcellular location is the cytoplasm. The protein localises to the cell inner membrane. The protein is High frequency lysogenization protein HflD homolog of Shewanella sp. (strain MR-4).